Here is a 570-residue protein sequence, read N- to C-terminus: Urease subunit alpha (570 aa).

Residues 132–570 (GGIDTHVHFL…VPMARRYFLF (439 aa)) form the Urease domain. Ni(2+)-binding residues include His137, His139, and Lys220. Lys220 is modified (N6-carboxylysine). His222 contributes to the substrate binding site. Residues His249 and His275 each contribute to the Ni(2+) site. His323 functions as the Proton donor in the catalytic mechanism. Asp363 contacts Ni(2+).

It belongs to the metallo-dependent hydrolases superfamily. Urease alpha subunit family. Heterotrimer of UreA (gamma), UreB (beta) and UreC (alpha) subunits. Three heterotrimers associate to form the active enzyme. Requires Ni cation as cofactor. Post-translationally, carboxylation allows a single lysine to coordinate two nickel ions.

It is found in the cytoplasm. It carries out the reaction urea + 2 H2O + H(+) = hydrogencarbonate + 2 NH4(+). It participates in nitrogen metabolism; urea degradation; CO(2) and NH(3) from urea (urease route): step 1/1. The protein is Urease subunit alpha of Corynebacterium glutamicum (strain ATCC 13032 / DSM 20300 / JCM 1318 / BCRC 11384 / CCUG 27702 / LMG 3730 / NBRC 12168 / NCIMB 10025 / NRRL B-2784 / 534).